Consider the following 483-residue polypeptide: GDP-fucose protein O-fucosyltransferase 3 (483 aa).

The Cytoplasmic portion of the chain corresponds to 1-8 (MVRIPRRK). The chain crosses the membrane as a helical; Signal-anchor for type II membrane protein span at residues 9–31 (LLPSCLCMTATVFLMVTVQVLVE). Residues 32–483 (LGKFERKKFK…FWALVFKDSF (452 aa)) are Lumenal-facing. The tract at residues 45 to 64 (LQDGQKDVEGDPKHLNPLPK) is disordered. N-linked (GlcNAc...) asparagine glycans are attached at residues asparagine 110, asparagine 168, and asparagine 318. A disulfide bridge connects residues cysteine 389 and cysteine 392. Asparagine 468 is a glycosylation site (N-linked (GlcNAc...) asparagine).

This sequence belongs to the glycosyltransferase 10 family.

The protein localises to the endoplasmic reticulum membrane. It catalyses the reaction L-threonyl-[protein] + GDP-beta-L-fucose = 3-O-(alpha-L-fucosyl)-L-threonyl-[protein] + GDP + H(+). The enzyme catalyses L-seryl-[protein] + GDP-beta-L-fucose = 3-O-(alpha-L-fucosyl)-L-seryl-[protein] + GDP + H(+). The protein operates within protein modification; protein glycosylation. Its function is as follows. Protein O-fucosyltransferase that specifically catalyzes O-fucosylation of serine or threonine residues in EMI domains of target proteins, such as MMRN1, MMRN2 and EMID1. Attaches fucose through an O-glycosidic linkage. O-fucosylation of EMI domain-containing proteins may be required for facilitating protein folding and secretion. May also show alpha-(1,3)-fucosyltransferase activity toward the innermost N-acetyl glucosamine (GlcNAc) residue in biantennary N-glycan acceptors. However, this was tested with a library of synthetic substrates and this activity is unsure in vivo. May be involved in biosynthesis of Lewis X-carrying biantennary N-glycans that regulate neuron stem cell self-renewal during brain development. In Rattus norvegicus (Rat), this protein is GDP-fucose protein O-fucosyltransferase 3 (Fut10).